We begin with the raw amino-acid sequence, 757 residues long: MDYLEVLDFPKVVDLVKRHTFSDLGKRHLDTLKPTVNPWNELELVEELLNYLTRWGEPPIKGLSDITPEMEKLKAGSSLEPWELLRVSSFLEGCDILKNDLTRREYQKLKETFSQLVSFEEFVKEVNRCIEQNGEVSNRASPKLKEIRSEKRSLSTEIKKRADDFVKNHSQILQEQMYVYRDGRYLFPVKASMKRSVRGIVHHLSSSGATVFMEPEEFVELNNRMRLLEEEERLEISRILRHLTNMLLSNLKDLEKNIDLIAHFDSLYARAKFAKENNGIVVKPSSRIKLVNARHPLIPKDRVVPINLELPPNKKGVIITGPNMGGKTVTVKTVGLFTALMMSGFPLLCDEGTELKIFPKIMADIGEEQSIEQSLSTFSSHMKRIVEIVRNADSDSLVILDELGSGTDPVEGAALAIAIIEDLLEKGATLFVTTHLTPVKVFAMNHPLLLNASMEFDPETLSPTYRVLVGVPGGSHAFQIAEKLGLEKRIIENARSRLSQEEMELEGLIRSLHEKISLLEEEKRKLQKEKEEYMKLRAKYEEDYKKLRRMKIEEFDKELKELNDYIRKVKKELDQAIHVAKSGSVEEMRKTVKTLEKEREDLKKKAIEEEAEEEINVGDHVRMEGGTSVGKVVEVKGNTALVDFGFLRVKVPLGKLKKAKKKEEEDREKGTHFVSSFRTEIDIRGMTVEEAEPVVKKFIDDLVMNGIKKGYIIHGKGTGKLATGVWEILRKDRRVVSFRFGTPSEGGTGVTVVEVEV.

An ATP-binding site is contributed by 321–328 (GPNMGGKT). Residues 681 to 756 (IDIRGMTVEE…GTGVTVVEVE (76 aa)) form the Smr domain.

It belongs to the DNA mismatch repair MutS family. MutS2 subfamily. Homodimer. Binds to stalled ribosomes, contacting rRNA.

In terms of biological role, endonuclease that is involved in the suppression of homologous recombination and thus may have a key role in the control of bacterial genetic diversity. Acts as a ribosome collision sensor, splitting the ribosome into its 2 subunits. Detects stalled/collided 70S ribosomes which it binds and splits by an ATP-hydrolysis driven conformational change. Acts upstream of the ribosome quality control system (RQC), a ribosome-associated complex that mediates the extraction of incompletely synthesized nascent chains from stalled ribosomes and their subsequent degradation. Probably generates substrates for RQC. The polypeptide is Endonuclease MutS2 (Thermotoga neapolitana (strain ATCC 49049 / DSM 4359 / NBRC 107923 / NS-E)).